The sequence spans 124 residues: Phosphoribosyl-ATP pyrophosphatase (124 aa).

It belongs to the PRA-PH family.

It localises to the cytoplasm. It catalyses the reaction 1-(5-phospho-beta-D-ribosyl)-ATP + H2O = 1-(5-phospho-beta-D-ribosyl)-5'-AMP + diphosphate + H(+). It participates in amino-acid biosynthesis; L-histidine biosynthesis; L-histidine from 5-phospho-alpha-D-ribose 1-diphosphate: step 2/9. In Ralstonia nicotianae (strain ATCC BAA-1114 / GMI1000) (Ralstonia solanacearum), this protein is Phosphoribosyl-ATP pyrophosphatase (hisE).